Here is a 341-residue protein sequence, read N- to C-terminus: S-adenosylmethionine:tRNA ribosyltransferase-isomerase (341 aa).

The protein belongs to the QueA family. As to quaternary structure, monomer.

It is found in the cytoplasm. The catalysed reaction is 7-aminomethyl-7-carbaguanosine(34) in tRNA + S-adenosyl-L-methionine = epoxyqueuosine(34) in tRNA + adenine + L-methionine + 2 H(+). It functions in the pathway tRNA modification; tRNA-queuosine biosynthesis. Transfers and isomerizes the ribose moiety from AdoMet to the 7-aminomethyl group of 7-deazaguanine (preQ1-tRNA) to give epoxyqueuosine (oQ-tRNA). This chain is S-adenosylmethionine:tRNA ribosyltransferase-isomerase, found in Pelotomaculum thermopropionicum (strain DSM 13744 / JCM 10971 / SI).